The chain runs to 398 residues: Cytochrome b (398 aa).

The next 4 membrane-spanning stretches (helical) occupy residues 38-58 (FGPL…FLAM), 82-104 (WFLR…FHMF), 119-139 (VRCS…IGYV), and 185-205 (FFSL…LHLG). The heme b site is built by His88 and His102. Residues His189 and His203 each coordinate heme b. His208 lines the a ubiquinone pocket. The next 4 membrane-spanning stretches (helical) occupy residues 231-251 (YYVK…IFIF), 295-316 (AGGV…FLNQ), 328-348 (IYHI…WIGC), and 355-374 (FVTI…AIMP).

This sequence belongs to the cytochrome b family. In terms of assembly, the main subunits of complex b-c1 are: cytochrome b, cytochrome c1 and the Rieske protein. Requires heme b as cofactor.

Its subcellular location is the mitochondrion inner membrane. Component of the ubiquinol-cytochrome c reductase complex (complex III or cytochrome b-c1 complex) that is part of the mitochondrial respiratory chain. The b-c1 complex mediates electron transfer from ubiquinol to cytochrome c. Contributes to the generation of a proton gradient across the mitochondrial membrane that is then used for ATP synthesis. The polypeptide is Cytochrome b (MT-CYB) (Daucus carota (Wild carrot)).